Here is a 440-residue protein sequence, read N- to C-terminus: Ribulose bisphosphate carboxylase large chain (440 aa).

Residue lysine 3 is modified to N6,N6,N6-trimethyllysine. Residues asparagine 112 and threonine 162 each contribute to the substrate site. Lysine 164 (proton acceptor) is an active-site residue. A substrate-binding site is contributed by lysine 166. 3 residues coordinate Mg(2+): lysine 190, aspartate 192, and glutamate 193. An N6-carboxylysine modification is found at lysine 190. The active-site Proton acceptor is histidine 283. Residues arginine 284, histidine 316, and serine 368 each coordinate substrate.

This sequence belongs to the RuBisCO large chain family. Type I subfamily. As to quaternary structure, heterohexadecamer of 8 large chains and 8 small chains; disulfide-linked. The disulfide link is formed within the large subunit homodimers. Mg(2+) is required as a cofactor. The disulfide bond which can form in the large chain dimeric partners within the hexadecamer appears to be associated with oxidative stress and protein turnover.

It localises to the plastid. Its subcellular location is the chloroplast. It carries out the reaction 2 (2R)-3-phosphoglycerate + 2 H(+) = D-ribulose 1,5-bisphosphate + CO2 + H2O. The catalysed reaction is D-ribulose 1,5-bisphosphate + O2 = 2-phosphoglycolate + (2R)-3-phosphoglycerate + 2 H(+). Functionally, ruBisCO catalyzes two reactions: the carboxylation of D-ribulose 1,5-bisphosphate, the primary event in carbon dioxide fixation, as well as the oxidative fragmentation of the pentose substrate in the photorespiration process. Both reactions occur simultaneously and in competition at the same active site. In Bambusa multiplex (Hedge bamboo), this protein is Ribulose bisphosphate carboxylase large chain.